Reading from the N-terminus, the 684-residue chain is Threonine--tRNA ligase (684 aa).

A TGS domain is found at 1 to 64 (MTAPNPSSLV…ESDTEVEPVA (64 aa)). A catalytic region spans residues 261 to 567 (DHRKLGVELD…LTEHYAGAFP (307 aa)). Zn(2+)-binding residues include Cys-366, His-417, and His-544.

Belongs to the class-II aminoacyl-tRNA synthetase family. Homodimer. It depends on Zn(2+) as a cofactor.

The protein resides in the cytoplasm. It carries out the reaction tRNA(Thr) + L-threonine + ATP = L-threonyl-tRNA(Thr) + AMP + diphosphate + H(+). Its function is as follows. Catalyzes the attachment of threonine to tRNA(Thr) in a two-step reaction: L-threonine is first activated by ATP to form Thr-AMP and then transferred to the acceptor end of tRNA(Thr). Also edits incorrectly charged L-seryl-tRNA(Thr). The chain is Threonine--tRNA ligase from Mycobacteroides abscessus (strain ATCC 19977 / DSM 44196 / CCUG 20993 / CIP 104536 / JCM 13569 / NCTC 13031 / TMC 1543 / L948) (Mycobacterium abscessus).